The chain runs to 406 residues: Succinylornithine transaminase (406 aa).

Lys-252 carries the post-translational modification N6-(pyridoxal phosphate)lysine.

It belongs to the class-III pyridoxal-phosphate-dependent aminotransferase family. AstC subfamily. Pyridoxal 5'-phosphate is required as a cofactor.

It carries out the reaction N(2)-succinyl-L-ornithine + 2-oxoglutarate = N-succinyl-L-glutamate 5-semialdehyde + L-glutamate. The protein operates within amino-acid degradation; L-arginine degradation via AST pathway; L-glutamate and succinate from L-arginine: step 3/5. Its function is as follows. Catalyzes the transamination of N(2)-succinylornithine and alpha-ketoglutarate into N(2)-succinylglutamate semialdehyde and glutamate. Can also act as an acetylornithine aminotransferase. The chain is Succinylornithine transaminase from Escherichia coli O157:H7.